A 338-amino-acid polypeptide reads, in one-letter code: Dehydrogenase/reductase SDR family member 7 (338 aa).

Residues 1 to 28 form the signal peptide; that stretch reads MSWELLLWLLALCALILPLVQLLRFLRA. Positions 60 and 62 each coordinate NAD(+). Ser190 is a substrate binding site. NAD(+) is bound by residues Tyr203, Lys207, and Ser239. Tyr203 functions as the Proton acceptor in the catalytic mechanism.

The protein belongs to the short-chain dehydrogenases/reductases (SDR) family.

It localises to the endoplasmic reticulum membrane. It carries out the reaction all-trans-retinol + NADP(+) = all-trans-retinal + NADPH + H(+). The enzyme catalyses 5alpha-androstane-3alpha,17beta-diol + NADP(+) = 17beta-hydroxy-5alpha-androstan-3-one + NADPH + H(+). Its function is as follows. NADPH-dependent oxidoreductase which catalyzes the reduction of a variety of compounds bearing carbonyl groups including steroids, retinoids and xenobiotics. Catalyzes the reduction/inactivation of 5alpha-dihydrotestosterone to 3alpha-androstanediol, with a possible role in the modulation of androgen receptor function. Involved in the reduction of all-trans-retinal to all-trans-retinol. Converts cortisone to 20beta-dihydrocortisone in vitro, although the physiological relevance of this activity is questionable. Reduces exogenous compounds such as quinones (1,2-naphtoquinone, 9,10-phenantrenequinone and benzoquinone) and other xenobiotics (alpha-diketones) in vitro, suggesting a role in the biotransformation of xenobiotics with carbonyl group. A dehydrogenase activity has not been detected so far. May play a role as tumor suppressor. The protein is Dehydrogenase/reductase SDR family member 7 of Mus musculus (Mouse).